The sequence spans 780 residues: Striatin (780 aa).

Residues 53–120 (LHFLQHEWAR…QERAKYHKLK (68 aa)) adopt a coiled-coil conformation. Residues 55–63 (FLQHEWARF) form a caveolin-binding region. The interval 123-150 (TELNQGDMKPPSYDSDEGNETEVQPQQN) is disordered. At serine 137 the chain carries Phosphoserine. The segment at 149–166 (QNSQLMWKQGRQLLRQYL) is calmodulin-binding. Threonine 225 is modified (phosphothreonine). 4 positions are modified to phosphoserine: serine 227, serine 229, serine 245, and serine 259. Disordered regions lie at residues 289–312 (DFLV…DWEK), 334–353 (EQYK…NRSK), and 364–392 (VDEL…ELSR). Positions 299–312 (NESRSAGDGTDWEK) are enriched in basic and acidic residues. Basic residues predominate over residues 338–351 (KERKGKKGVKRPNR). 6 WD repeats span residues 461 to 500 (SHFD…PAKK), 514 to 553 (AHKG…VDPY), 567 to 606 (GHTD…PALS), 662 to 701 (SSSC…LIHS), 704 to 743 (AHLE…CIQE), and 750 to 780 (KFEE…KVFV).

It belongs to the WD repeat striatin family. Part of the core of STRIPAK complexes composed of PP2A catalytic and scaffolding subunits, the striatins (PP2A regulatory subunits), the striatin-associated proteins MOB4, STRIP1 and STRIP2, PDCD10 and members of the STE20 kinases, such as STK24 and STK26. Interacts with CTTNBP2; this interaction may regulate dendritic spine distribution of STRN. Activation of glutamate receptors weakens the interaction with CTTNBP2. In terms of tissue distribution, mainly expressed in brain but is also expressed at low levels in various tissues such as kidney, spleen, skeletal muscle and lung.

The protein resides in the cytoplasm. It localises to the membrane. The protein localises to the cell projection. Its subcellular location is the dendritic spine. Functionally, calmodulin-binding scaffolding protein which is the center of the striatin-interacting phosphatase and kinase (STRIPAK) complexes. STRIPAK complexes have critical roles in protein (de)phosphorylation and are regulators of multiple signaling pathways including Hippo, MAPK, nuclear receptor and cytoskeleton remodeling. Different types of STRIPAK complexes are involved in a variety of biological processes such as cell growth, differentiation, apoptosis, metabolism and immune regulation. The sequence is that of Striatin (Strn) from Mus musculus (Mouse).